Reading from the N-terminus, the 438-residue chain is V-type ATP synthase beta chain (438 aa).

It belongs to the ATPase alpha/beta chains family.

Produces ATP from ADP in the presence of a proton gradient across the membrane. The V-type beta chain is a regulatory subunit. This chain is V-type ATP synthase beta chain (atpB), found in Chlamydia pneumoniae (Chlamydophila pneumoniae).